We begin with the raw amino-acid sequence, 140 residues long: Zinc finger SWIM domain-containing protein 7 (140 aa).

The segment at 76 to 114 (YTCFTSCHYCPCPAFSFTVLRRNESLMCKHLLAVILSQA) adopts an SWIM-type zinc-finger fold.

The protein belongs to the SWS1 family.

It localises to the nucleus. Involved in early stages of the homologous recombination repair (HRR) pathway of double-stranded DNA breaks arising during DNA replication or induced by DNA-damaging agents. The chain is Zinc finger SWIM domain-containing protein 7 (zswim7) from Danio rerio (Zebrafish).